The sequence spans 124 residues: Ribonuclease pancreatic (124 aa).

The span at 1 to 13 shows a compositional bias: basic and acidic residues; it reads KESAAAKFERQHM. The tract at residues 1 to 25 is disordered; that stretch reads KESAAAKFERQHMDPSPSSASSSNY. 2 residues coordinate substrate: lysine 7 and arginine 10. Histidine 12 serves as the catalytic Proton acceptor. Cystine bridges form between cysteine 26/cysteine 84, cysteine 40/cysteine 95, cysteine 58/cysteine 110, and cysteine 65/cysteine 72. A glycan (N-linked (GlcNAc...) asparagine; partial) is linked at asparagine 34. Substrate contacts are provided by residues 41–45, lysine 66, and arginine 85; that span reads KPVNT. The Proton donor role is filled by histidine 119.

The protein belongs to the pancreatic ribonuclease family. In terms of assembly, monomer. Interacts with and forms tight 1:1 complexes with RNH1. Dimerization of two such complexes may occur. Interaction with RNH1 inhibits this protein. As to expression, pancreas.

The protein resides in the secreted. The enzyme catalyses an [RNA] containing cytidine + H2O = an [RNA]-3'-cytidine-3'-phosphate + a 5'-hydroxy-ribonucleotide-3'-[RNA].. The catalysed reaction is an [RNA] containing uridine + H2O = an [RNA]-3'-uridine-3'-phosphate + a 5'-hydroxy-ribonucleotide-3'-[RNA].. Functionally, endonuclease that catalyzes the cleavage of RNA on the 3' side of pyrimidine nucleotides. Acts on single-stranded and double-stranded RNA. The protein is Ribonuclease pancreatic (RNASE1) of Capreolus capreolus (European roe deer).